The primary structure comprises 352 residues: B1 bradykinin receptor (352 aa).

Residues 1–41 lie on the Extracellular side of the membrane; the sequence is MASWPPLELQSSNQSQLFPQNATACDNAPEAWDLLHRVLPT. 2 N-linked (GlcNAc...) asparagine glycosylation sites follow: Asn13 and Asn21. The helical transmembrane segment at 42-62 threads the bilayer; it reads FIISICSFGLLGNLFVLLVFL. The Cytoplasmic portion of the chain corresponds to 63–72; the sequence is LPRRRLNVAE. A helical transmembrane segment spans residues 73–93; it reads IYLANLAASDLVFVLGLPFWA. The Extracellular portion of the chain corresponds to 94–110; that stretch reads ENIWNQFNWPFGALLCR. A disulfide bridge connects residues Cys109 and Cys188. A helical transmembrane segment spans residues 111-131; it reads GINGVIKANLFISIFLVVAIS. The Cytoplasmic portion of the chain corresponds to 132–153; the sequence is QDRYCLLVHPMASRRRQRRRQA. Residues 154 to 174 traverse the membrane as a helical segment; sequence RVTCVLIWVVGGLLSIPTFLL. Residues 175–206 lie on the Extracellular side of the membrane; it reads RSIQAVPDLNITACILLLPHEAWHFARIVELN. A glycan (N-linked (GlcNAc...) asparagine) is linked at Asn184. The helical transmembrane segment at 207–227 threads the bilayer; that stretch reads ILAFLLPLAAIVFFNYHILAS. The Cytoplasmic portion of the chain corresponds to 228–250; sequence LRGREEVSRTRCGGRKDSKTTAL. The chain crosses the membrane as a helical span at residues 251 to 271; that stretch reads ILTLVVAFLVCWAPYHFFAFL. Over 272–294 the chain is Extracellular; it reads EFLFQVQAIRGCFWEDFIDLGLQ. The chain crosses the membrane as a helical span at residues 295-315; that stretch reads LANFLAFTNSSLNPVIYVFVG. Topologically, residues 316–352 are cytoplasmic; that stretch reads RLFRTKVWELYKQCTPKSLAPISSSHRKEIFQLFWRN. The S-palmitoyl cysteine moiety is linked to residue Cys329.

It belongs to the G-protein coupled receptor 1 family. Bradykinin receptor subfamily. BDKRB1 sub-subfamily.

The protein resides in the cell membrane. In terms of biological role, this is a receptor for bradykinin. Could be a factor in chronic pain and inflammation. This is B1 bradykinin receptor (BDKRB1) from Chlorocebus aethiops (Green monkey).